Consider the following 95-residue polypeptide: YcgL domain-containing protein Patl_2802 (95 aa).

The YcgL domain occupies 4–88 (LLCAVYKSSK…PEENLLKQHL (85 aa)).

The sequence is that of YcgL domain-containing protein Patl_2802 from Pseudoalteromonas atlantica (strain T6c / ATCC BAA-1087).